We begin with the raw amino-acid sequence, 899 residues long: Protein translocase subunit SecA (899 aa).

ATP is bound by residues Gln87, Gly105–Thr109, and Asp516. Residues Cys884, Cys886, Cys895, and His896 each coordinate Zn(2+).

Belongs to the SecA family. In terms of assembly, monomer and homodimer. Part of the essential Sec protein translocation apparatus which comprises SecA, SecYEG and auxiliary proteins SecDF. Other proteins may also be involved. The cofactor is Zn(2+).

It localises to the cell inner membrane. The protein localises to the cytoplasm. The enzyme catalyses ATP + H2O + cellular proteinSide 1 = ADP + phosphate + cellular proteinSide 2.. Its function is as follows. Part of the Sec protein translocase complex. Interacts with the SecYEG preprotein conducting channel. Has a central role in coupling the hydrolysis of ATP to the transfer of proteins into and across the cell membrane, serving as an ATP-driven molecular motor driving the stepwise translocation of polypeptide chains across the membrane. In Borreliella burgdorferi (strain ZS7) (Borrelia burgdorferi), this protein is Protein translocase subunit SecA.